Here is a 187-residue protein sequence, read N- to C-terminus: Holliday junction branch migration complex subunit RuvA (187 aa).

Positions 1–64 are domain I; the sequence is MIEYVRGIIE…EDGFQIFGFK (64 aa). Positions 65–136 are domain II; it reads TKEELDLFEK…ELKDKLPKEI (72 aa). A flexible linker region spans residues 136–139; sequence IVFE. The interval 140–187 is domain III; that stretch reads GDNNFSNEALEALLALGYTKSEAIYALADITCDSVEDAVKQALKKLMK.

This sequence belongs to the RuvA family. In terms of assembly, homotetramer. Forms an RuvA(8)-RuvB(12)-Holliday junction (HJ) complex. HJ DNA is sandwiched between 2 RuvA tetramers; dsDNA enters through RuvA and exits via RuvB. An RuvB hexamer assembles on each DNA strand where it exits the tetramer. Each RuvB hexamer is contacted by two RuvA subunits (via domain III) on 2 adjacent RuvB subunits; this complex drives branch migration. In the full resolvosome a probable DNA-RuvA(4)-RuvB(12)-RuvC(2) complex forms which resolves the HJ.

The protein resides in the cytoplasm. In terms of biological role, the RuvA-RuvB-RuvC complex processes Holliday junction (HJ) DNA during genetic recombination and DNA repair, while the RuvA-RuvB complex plays an important role in the rescue of blocked DNA replication forks via replication fork reversal (RFR). RuvA specifically binds to HJ cruciform DNA, conferring on it an open structure. The RuvB hexamer acts as an ATP-dependent pump, pulling dsDNA into and through the RuvAB complex. HJ branch migration allows RuvC to scan DNA until it finds its consensus sequence, where it cleaves and resolves the cruciform DNA. The protein is Holliday junction branch migration complex subunit RuvA of Thermoanaerobacter pseudethanolicus (strain ATCC 33223 / 39E) (Clostridium thermohydrosulfuricum).